The primary structure comprises 1113 residues: Protein MGA2 (1113 aa).

Residues 91–114 form a disordered region; that stretch reads TPLEEEMESNRALKEEEEDEHENK. Ser255 is modified (phosphoserine). Polar residues-rich tracts occupy residues 344 to 357 and 437 to 452; these read DTTK…SSRR and HIPS…SESF. Disordered regions lie at residues 344–376 and 437–462; these read DTTK…NNQL and HIPS…NDNP. Phosphoserine is present on Ser467. The 81-residue stretch at 530-610 folds into the IPT/TIG domain; that stretch reads PSINRVIPSQ…NENNNDDLPQ (81 aa). Residues 658 to 687 form a disordered region; it reads IVGNDSPDSGTNGNSCSKSTGPSPNQHSMN. Positions 663-687 are enriched in polar residues; sequence SPDSGTNGNSCSKSTGPSPNQHSMN. ANK repeat units follow at residues 719–748 and 752–781; these read LGRT…RVND and FGLT…NYSL. Residues 1037 to 1054 form a helical membrane-spanning segment; the sequence is MLIFFWIPLTLLLLTWFI.

The protein localises to the membrane. This chain is Protein MGA2 (MGA2), found in Saccharomyces cerevisiae (strain ATCC 204508 / S288c) (Baker's yeast).